Consider the following 149-residue polypeptide: D-aminoacyl-tRNA deacylase (149 aa).

The Gly-cisPro motif, important for rejection of L-amino acids signature appears at G137–P138.

This sequence belongs to the DTD family. Homodimer.

The protein resides in the cytoplasm. It carries out the reaction glycyl-tRNA(Ala) + H2O = tRNA(Ala) + glycine + H(+). It catalyses the reaction a D-aminoacyl-tRNA + H2O = a tRNA + a D-alpha-amino acid + H(+). In terms of biological role, an aminoacyl-tRNA editing enzyme that deacylates mischarged D-aminoacyl-tRNAs. Also deacylates mischarged glycyl-tRNA(Ala), protecting cells against glycine mischarging by AlaRS. Acts via tRNA-based rather than protein-based catalysis; rejects L-amino acids rather than detecting D-amino acids in the active site. By recycling D-aminoacyl-tRNA to D-amino acids and free tRNA molecules, this enzyme counteracts the toxicity associated with the formation of D-aminoacyl-tRNA entities in vivo and helps enforce protein L-homochirality. The protein is D-aminoacyl-tRNA deacylase of Alkaliphilus metalliredigens (strain QYMF).